Here is a 217-residue protein sequence, read N- to C-terminus: MEFVQIAIDGPAGAGKSTIAKRIAERLNITYIDTGAMYRALTYKVLANNIDITNEKTIIELAQNSNIQFLQENIYLDGKMINEEIRSIEINKKVSHVAKIKEVREILVDAQRKIALGQDVIMDGRDIGTHVLPNATLKIFLTASVQERALRRYLELKKKGIEVDIDELEKDIMNRDNIDSQRAFAPLVKAQDAIIIDTTGLTIEDVVERIINLLKGV.

An ATP-binding site is contributed by 10–18 (GPAGAGKST).

The protein belongs to the cytidylate kinase family. Type 1 subfamily.

Its subcellular location is the cytoplasm. It catalyses the reaction CMP + ATP = CDP + ADP. It carries out the reaction dCMP + ATP = dCDP + ADP. The protein is Cytidylate kinase of Alkaliphilus oremlandii (strain OhILAs) (Clostridium oremlandii (strain OhILAs)).